A 130-amino-acid polypeptide reads, in one-letter code: MSMQDPIADMLTRIRNGQAANHVSVKMPSAKLKVAIAKLLQDEGFITGYAVADEAKPELEITLKYFQGKPVVETIQRVSRPGLRIYKGKDELPKVMGGLGIAIVSTSQGLMTDRAARQNGTGGEVICYVA.

Belongs to the universal ribosomal protein uS8 family. In terms of assembly, part of the 30S ribosomal subunit. Contacts proteins S5 and S12.

In terms of biological role, one of the primary rRNA binding proteins, it binds directly to 16S rRNA central domain where it helps coordinate assembly of the platform of the 30S subunit. The chain is Small ribosomal subunit protein uS8 from Shewanella denitrificans (strain OS217 / ATCC BAA-1090 / DSM 15013).